The chain runs to 398 residues: Homocysteine-responsive endoplasmic reticulum-resident ubiquitin-like domain member 2 protein (398 aa).

In terms of domain architecture, Ubiquitin-like spans 11 to 90; sequence VTLVIKAPNQ…HMVHLVCASR (80 aa). Disordered regions lie at residues 90–143 and 212–247; these read RTPP…SIRH and NQST…NVAP. Residues 96–125 show a composition bias toward low complexity; that stretch reads PKASKSSKSMGTSSSGRSSSSGSANPGSTS. Positions 233–245 are enriched in pro residues; that stretch reads NPPPNPPRAPPNV. A helical membrane pass occupies residues 298 to 318; sequence FVMVMGALILVYMHQAGWFPL.

Its subcellular location is the membrane. Its function is as follows. Could be involved in the unfolded protein response (UPR) pathway. The protein is Homocysteine-responsive endoplasmic reticulum-resident ubiquitin-like domain member 2 protein (herpud2) of Xenopus laevis (African clawed frog).